We begin with the raw amino-acid sequence, 2592 residues long: MVLHPSDRRFPETNGVGGHSKDSSAKSGYTSLEPLAIVGFASHLAGDATDNENLWKHILEGQSASGPFPQNRLQGNQYFHPDPEHGGTCATKGGYFLKKDIDTFDASFFRLSEYDIAAMDPQQKILLENVYHAVENAGLPMESLAGSRTSVYVGSSTNDHAALTNEDLDFTIKNKATGTLPSLLANRVSWFYDLKGASIVIDTACSSSLVALHMACLDIRAGGSEMAIVSGINLLQHPASLMLLSNLGVLSPDGRSYAFDDRANGYGRGEGVITVVVKSLQAAIRDGDRVRALVRASGVSSDGKTAGITLPSEEEQKVLIRNVYASANLDVNETTYVEAHGTGTPVGDPLECKAIMSAFRTQRRKQTLYIGSIKANIGHLEGGAGLAGLVKAIMMLEKQIIPPIAGLQRLNPLISQDGHNVCFTREAIPWPKSHVRRASVNSFGFGGTNAHVVLESPDMFLHGRSLDTTSTSLVRLPNGYLNGINGQKTPPEDSPKSYVFMISANDENGIQRNAMLLKKYIDNYLKTQCSFSEDQFMKDLVYTLSEKRSRLKWRASIIASSLTELSQQLTGGTLPKFRAANTEPGISFVFTGQGAQWPGMGKMLMEFPIFRQSVEAASLHLQKQGSQWTLHDAFDPIEDSKTDINNPIQSQTACTVLQVALVDLLQSWNISPSIVIGHSSGEIAAAYCAGAISREAAWNISYYRGLVSSILVKGGGGAMIAVGLHPQEAQKYINQLSPELQCMVQIGCYNSPNNTTITGERNAILILQALLDENGVFNRVLATPVAYHSQYMQPVADTYSTLLRLSDLSVGRMRQPQIDEEIVMISSVTGEPIGAKRLQDPQYWTQNLISPVKFMNALHQLKNFAPQFNLQELLELGPHSALQSAIRESMADGQSTAPQIRYSHTITRKKMTYSTILSTAAGLFCRGYPVNLVATSCTDSHHGTLLTDLPGYEFNHDAGLRAESRRMKNSRLPEFPRHELLGSPDPDWDRREPRWRNFLRTSELPWLRDNKVNGGIIFPGVGYSIMAMEAVKQISDRSISIAGYRLKQISMEAALIVPDTRDGLEVMTSLREVYDEGSTTSPKYQFSVKTHDTMRNEWIEHCSGFIESKCESDSIEDMGTWRPLPWDAVHDLQFSEESCTQIGSISAFYDALERSGFDLGPTLKNLVDVRTSATSPHCMTKMAAPSIAEHMPKGYNFPYIIHPSTMESMAHAILHVCTTKEAPVGSALLARYIDNIWISNKIPMDPGHLFVTVADGEQVSPGKWRCAITVWNDATKEVVIQIRGTELCLLSAGRGDQKTVPECFLVKWYPSLDLVTDKLPFASLSSPETGVTEARHAHKTYEQLCTLYIARALKSLHGYDRKLLPQHLQQYLDWMVRQTMDSDAHTMRAILVENEVKLKEESGMLEALRTQAQGLGSRGELLVNVGDHIVPLIKGEKDPQSIIIGGNDLRPWTLDQDLSGNIKNVLSDNLKALRHGQGQLKVLEIGTGFGSVTAHIIKALTSVEDMSQTVFGKYQYTNKHNSSFEDVRQKCGDWLSLMDFQVLDVDQSVAEQGFEEHSYDLVISAHAFTRTVSLERSLKNAHSLLKPGGKLLVIENVQPQYKSTPFVYGLFPGWWHSTEPFRSTTPLVSEDKWVELLEATGFTTSSVKDVENEKSNETCLFLSTAIRTKELIAAPPFDDIVLTHHAYDPKNLVSSLLAAIKQISGLPVIVVPFSQLSHRKMERSFCIVVGELGQGYLDLSCVNEDIYREMKRLLLTCQNLLWISLDDVDYPKAALSTGLVRTLRWEREMDKINFLTLKFAQSSSHVPEIVSAVTSLYQHYFDGKVEASPNSEFLYKDGSFWVNRLYPAKTANNFLQSHISEAPQSQMLGDNVDRSLKARFKGSGRQGLLVWSDDEALSQPLSASEIQIDVQASGLTFQDGMAIRGDIDQHVFGKQVAGTVTQVGQKVEALEPGDHVMALLVGSEQHSLSRSIRVNANFAQRLSPDADFMEAATIPTTFTAVHYALHNVARVMESEKVLVHGAMQAAGQAAIQLAKLAGADVFVTVKTFEQKQKIETKYGIPENHVFIANEHLDAGIKEATGGASGVDIVLNFLHGSATRSAWQCVGMMGRFVDMALKAPGRHRGLDMSPFSRNAMYIGVDIAALGTAHHPSIMKAFSKVGELFRQRLIFGPGHKPFSYNNFGAAMIHIQNDSNMDTAVIVPKADDVIQVVPCKYTAYEFPTDATYVIAGGLGGLGRSAARWMCSKGARHLILISRSGARTASAKELLQDLASQGCKIKICQCDITDKDNLQIAMRECASGMPPIKGCLQSTMLLQDSIFENMSFQQFMAGIHPKVQGSLNVLDAIPDQLDFFLVLSSAASIVGNRGQANYNSANAFQDSLAEHLTSKGIPGMSVNLGNMLSVGWVAENEGALPLDLVYSSIDEPEFHALLEYHLDPRWGASQSVETCHTIAGVRSATRFNEDRTPIPSFMNDPLFTIIRESTNGTTDNGEQEREISISTLLKESSSVQVAASHVTEAIICKLSSVMSFPAAEIDPSQGLASYGVDSLVTVDFRTWIAKDMGANLSTADILDDGNIIGLSEKIARQSKFVKVA.

Positions 1-11 (MVLHPSDRRFP) are enriched in basic and acidic residues. Positions 1–25 (MVLHPSDRRFPETNGVGGHSKDSSA) are disordered. Positions 32–456 (LEPLAIVGFA…GTNAHVVLES (425 aa)) constitute a Ketosynthase family 3 (KS3) domain. Catalysis depends on for beta-ketoacyl synthase activity residues cysteine 205, histidine 340, and histidine 379. Residues 589–910 (VFTGQGAQWP…RYSHTITRKK (322 aa)) are malonyl-CoA:ACP transacylase (MAT) domain. The tract at residues 978–1113 (HELLGSPDPD…GFIESKCESD (136 aa)) is N-terminal hotdog fold. The segment at 978–1291 (HELLGSPDPD…IRGTELCLLS (314 aa)) is dehydratase (DH) domain. Residues 978–1296 (HELLGSPDPD…LCLLSAGRGD (319 aa)) enclose the PKS/mFAS DH domain. The C-terminal hotdog fold stretch occupies residues 1140–1296 (TQIGSISAFY…LCLLSAGRGD (157 aa)). Residues isoleucine 1462 and glutamate 1484 each coordinate S-adenosyl-L-methionine. The segment at 1483–1591 (LEIGTGFGSV…HSLLKPGGKL (109 aa)) is methyltransferase (CMeT) domain. An enoyl reductase (ER) domain region spans residues 1887–2199 (GLLVWSDDEA…NDSNMDTAVI (313 aa)). Residues 2223–2398 (ATYVIAGGLG…IPGMSVNLGN (176 aa)) are ketoreductase (KR) domain. The 78-residue stretch at 2509–2586 (VAASHVTEAI…GLSEKIARQS (78 aa)) folds into the Carrier domain. Position 2546 is an O-(pantetheine 4'-phosphoryl)serine (serine 2546).

It catalyses the reaction 5 malonyl-CoA + AH2 + 5 H(+) = 6-hydroxymellein + A + 5 CO2 + 5 CoA + H2O. It participates in secondary metabolite biosynthesis; terpenoid biosynthesis. Its function is as follows. Highly reducing polyketide synthase; part of the gene cluster that mediates the biosynthesis of chrodrimanin B, a meroterpenoid that acts as a potent blocker of insect GABA-gated chloride channels. The first step of the pathway is the biosynthesis of 6-hydroxymellein by the polyketide synthase cdmE. The prenyltransferase cdmH acts as a 6-hydroxymellein 5-farnesyltransferase and produces the hydrophobic metabolite verruculide C. The FAD-dependent monooxygenase cdmI further converts verruculide C into verruculide B. The terpene cyclase cdmG then produced the pentacyclic molecule 3-hydroxypentacecilide A, the backbone structure of chrodrimanin B, via folding the farnesyl moiety of the substrate into the chair-boat conformation. The short-chain dehydrogenase/reductase cdmF functions as the 3-OH dehydrogenase that oxidizes the C-3 hydroxyl group of 3-hydroxypentacecilide A and produces chrodrimanin C, the dehydrogenated product of 3-hydroxypentacecilide A. The cytochrome P450 monooxygenase cdmJ then accepts both 3-hydroxypentacecilide A and chrodrimanin C and functions as a C-7-beta-hydroxylase to produce respectively chrodrimanin H and chrodrimanin F. The dioxygenase cdmA accepts chrodrimanin H to afford chrodrimanin E, which is further transformed to chrodrimanin A by the dioxygenase cdmD. CdmA can also accept chrodrimanin C as substrate to convert it into verruculide A, which is further converted into chrodrimanin T by cdmD. The last step of the biosynthesis is proposed to be performed by the acetyltransferase cdmC which acetylates chrodrimanin A to yield chrodrimanin B. The pathway may also lead to the production of additional shunt products, including chrodrimanins T and U. The sequence is that of 6-hydroxymellein synthase cdmE from Talaromyces verruculosus (Penicillium verruculosum).